The primary structure comprises 276 residues: Checkpoint protein HUS1B (276 aa).

The protein belongs to the HUS1 family. As to quaternary structure, interacts with RAD1 and RAD9B.

The polypeptide is Checkpoint protein HUS1B (Hus1b) (Mus musculus (Mouse)).